Consider the following 959-residue polypeptide: rDNA transcriptional regulator pol5 (959 aa).

A phosphoserine mark is found at serine 742 and serine 743. Positions 936 to 959 (HQQTSTAASSPQKTGHHENEKTNH) are disordered. The span at 937–948 (QQTSTAASSPQK) shows a compositional bias: polar residues. The segment covering 950 to 959 (GHHENEKTNH) has biased composition (basic and acidic residues).

Belongs to the MYBBP1A family. In terms of assembly, interacts with cdc10.

Its subcellular location is the nucleus. Plays an important role in the regulation of rRNA transcription. Binds to rDNA promoter fragments. This chain is rDNA transcriptional regulator pol5 (pol5), found in Schizosaccharomyces pombe (strain 972 / ATCC 24843) (Fission yeast).